We begin with the raw amino-acid sequence, 184 residues long: TATA-box-binding protein (184 aa).

2 repeat units span residues 9–85 and 100–178.

This sequence belongs to the TBP family.

In terms of biological role, general factor that plays a role in the activation of archaeal genes transcribed by RNA polymerase. Binds specifically to the TATA box promoter element which lies close to the position of transcription initiation. The polypeptide is TATA-box-binding protein (Picrophilus torridus (strain ATCC 700027 / DSM 9790 / JCM 10055 / NBRC 100828 / KAW 2/3)).